The chain runs to 257 residues: Imidazole glycerol phosphate synthase subunit HisF (257 aa).

Catalysis depends on residues Asp-11 and Asp-130.

Belongs to the HisA/HisF family. In terms of assembly, heterodimer of HisH and HisF.

It is found in the cytoplasm. It catalyses the reaction 5-[(5-phospho-1-deoxy-D-ribulos-1-ylimino)methylamino]-1-(5-phospho-beta-D-ribosyl)imidazole-4-carboxamide + L-glutamine = D-erythro-1-(imidazol-4-yl)glycerol 3-phosphate + 5-amino-1-(5-phospho-beta-D-ribosyl)imidazole-4-carboxamide + L-glutamate + H(+). It functions in the pathway amino-acid biosynthesis; L-histidine biosynthesis; L-histidine from 5-phospho-alpha-D-ribose 1-diphosphate: step 5/9. IGPS catalyzes the conversion of PRFAR and glutamine to IGP, AICAR and glutamate. The HisF subunit catalyzes the cyclization activity that produces IGP and AICAR from PRFAR using the ammonia provided by the HisH subunit. In Francisella philomiragia subsp. philomiragia (strain ATCC 25017 / CCUG 19701 / FSC 153 / O#319-036), this protein is Imidazole glycerol phosphate synthase subunit HisF.